Consider the following 968-residue polypeptide: RNA polymerase-associated protein RapA (968 aa).

The region spanning 163-332 (EVGRRYAPRV…FARLRLLDPD (170 aa)) is the Helicase ATP-binding domain. 176–183 (DEVGLGKT) provides a ligand contact to ATP. The DEAH box signature appears at 278–281 (DEAH). The 151-residue stretch at 491–641 (RVDWLIEFLK…AFELTCPSGH (151 aa)) folds into the Helicase C-terminal domain.

Belongs to the SNF2/RAD54 helicase family. RapA subfamily. Interacts with the RNAP. Has a higher affinity for the core RNAP than for the holoenzyme. Its ATPase activity is stimulated by binding to RNAP.

In terms of biological role, transcription regulator that activates transcription by stimulating RNA polymerase (RNAP) recycling in case of stress conditions such as supercoiled DNA or high salt concentrations. Probably acts by releasing the RNAP, when it is trapped or immobilized on tightly supercoiled DNA. Does not activate transcription on linear DNA. Probably not involved in DNA repair. The sequence is that of RNA polymerase-associated protein RapA from Shewanella baltica (strain OS185).